Reading from the N-terminus, the 197-residue chain is Protein GrpE (197 aa).

Residues 1–12 (MTDSDGKTDKSG) show a composition bias toward basic and acidic residues. A disordered region spans residues 1-35 (MTDSDGKTDKSGEPAAEVEPVVSKPYVMPDDPEDD).

Belongs to the GrpE family. Homodimer.

The protein resides in the cytoplasm. In terms of biological role, participates actively in the response to hyperosmotic and heat shock by preventing the aggregation of stress-denatured proteins, in association with DnaK and GrpE. It is the nucleotide exchange factor for DnaK and may function as a thermosensor. Unfolded proteins bind initially to DnaJ; upon interaction with the DnaJ-bound protein, DnaK hydrolyzes its bound ATP, resulting in the formation of a stable complex. GrpE releases ADP from DnaK; ATP binding to DnaK triggers the release of the substrate protein, thus completing the reaction cycle. Several rounds of ATP-dependent interactions between DnaJ, DnaK and GrpE are required for fully efficient folding. The chain is Protein GrpE from Nitrobacter winogradskyi (strain ATCC 25391 / DSM 10237 / CIP 104748 / NCIMB 11846 / Nb-255).